A 268-amino-acid chain; its full sequence is Small ribosomal subunit protein eS1 (268 aa).

Disordered stretches follow at residues 1–21 and 238–268; these read MAVG…KKKV and GGGK…QEAV.

This sequence belongs to the eukaryotic ribosomal protein eS1 family. In terms of assembly, component of the small ribosomal subunit. Mature ribosomes consist of a small (40S) and a large (60S) subunit. The 40S subunit contains about 33 different proteins and 1 molecule of RNA (18S). The 60S subunit contains about 49 different proteins and 3 molecules of RNA (28S, 5.8S and 5S).

The protein localises to the cytoplasm. Essential for oogenesis; required for late follicle cell development. The chain is Small ribosomal subunit protein eS1 from Drosophila ananassae (Fruit fly).